Here is a 428-residue protein sequence, read N- to C-terminus: Somatostatin receptor type 3 (428 aa).

The Extracellular portion of the chain corresponds to 1–45 (MAAVTYPSSVPTTLDPGNASSAWPLDTSLGNASAGTSLAGLAVSG). Residues asparagine 18 and asparagine 31 are each glycosylated (N-linked (GlcNAc...) asparagine). The helical transmembrane segment at 46 to 71 (ILISLVYLVVCVVGLLGNSLVIYVVL) threads the bilayer. At 72–81 (RHTSSPSVTS) the chain is on the cytoplasmic side. A helical membrane pass occupies residues 82–103 (VYILNLALADELFMLGLPFLAA). Over 104–118 (QNALSYWPFGSLMCR) the chain is Extracellular. Cysteine 117 and cysteine 192 are disulfide-bonded. Residues 119 to 140 (LVMAVDGINQFTSIFCLTVMSV) form a helical membrane-spanning segment. Topologically, residues 141 to 162 (DRYLAVVHPTRSARWRTAPVAR) are cytoplasmic. Residues 163 to 182 (MVSAAVWVASAVVVLPVVVF) traverse the membrane as a helical segment. The Extracellular segment spans residues 183–206 (SGVPRGMSTCHMQWPEPAAAWRTA). Residues 207–232 (FIIYTAALGFFGPLLVICLCYLLIVV) form a helical membrane-spanning segment. At 233-266 (KVRSTTRRVRAPSCQWVQAPACQRRRRSERRVTR) the chain is on the cytoplasmic side. Residues 267–288 (MVVAVVALFVLCWMPFYLLNIV) traverse the membrane as a helical segment. At 289-302 (NVVCPLPEEPAFFG) the chain is on the extracellular side. A helical membrane pass occupies residues 303 to 325 (LYFLVVALPYANSCANPILYGFL). At 326-428 (SYRFKQGFRR…GDKASTLSHL (103 aa)) the chain is on the cytoplasmic side. 3 positions are modified to phosphoserine: serine 341, serine 346, and serine 351. The segment at 343-428 (RVRSQEPGSG…GDKASTLSHL (86 aa)) is disordered. Residue threonine 357 is modified to Phosphothreonine. Over residues 357–370 (TEEEEDEEEEERRE) the composition is skewed to acidic residues. Residues 385-412 (RLSQIAQPGPSGQQQRPCTGTAKEQQLL) are compositionally biased toward polar residues.

The protein belongs to the G-protein coupled receptor 1 family. Homodimer and heterodimer with SSTR2. Heterodimerization with SSTR2 inactivates SSTR3 receptor function. In terms of processing, phosphorylated. Phosphorylation increases upon somatostatin binding. In terms of tissue distribution, densely expressed in cerebellum and at moderate levels in the amygdala, cortex, striatum, spleen, liver and pituitary.

Its subcellular location is the cell membrane. Its function is as follows. Receptor for somatostatin-14 and -28. This receptor is coupled via pertussis toxin sensitive G proteins to inhibition of adenylyl cyclase. The protein is Somatostatin receptor type 3 (Sstr3) of Rattus norvegicus (Rat).